The chain runs to 206 residues: MVSGSGICSKRVVVDARHHMCGRLASIIAKELLNGQSVVVVRCEEICLSGGLVRQKMKYMRFLRKRMNTKPSHGPIHFRAPSKIFWRTVRGMIPHKTKRGAAALARLKVFEGVPPPYDKVKRMVIPDALKVLRLQAGHKYCLLGRLSSEVGWNHYDTIKELEVKRKERSQALYERKKQLTKLRAKAEKVAEEKLGSQLDVLASIKY.

The protein belongs to the universal ribosomal protein uL13 family.

The chain is Large ribosomal subunit protein uL13y (RPL13AB) from Arabidopsis thaliana (Mouse-ear cress).